The sequence spans 277 residues: Xyloglucan endotransglucosylase/hydrolase protein 19 (277 aa).

The N-terminal stretch at 1 to 21 (MKSFTFLILFLFAAQSISVYA) is a signal peptide. The GH16 domain occupies 22–213 (GSFHKDVKIH…WSKAPFTAYY (192 aa)). The active-site Nucleophile is E99. The active-site Proton donor is E103. E103 contributes to the xyloglucan binding site. A glycan (N-linked (GlcNAc...) asparagine) is linked at N107. Xyloglucan-binding positions include 116–118 (HTN), 126–128 (DKE), 192–193 (HW), and G197. Disulfide bonds link C221–C230 and C262–C276. R267 lines the xyloglucan pocket.

This sequence belongs to the glycosyl hydrolase 16 family. XTH group 2 subfamily. In terms of processing, contains at least one intrachain disulfide bond essential for its enzymatic activity. Root specific.

It is found in the secreted. Its subcellular location is the cell wall. The protein resides in the extracellular space. It localises to the apoplast. It catalyses the reaction breaks a beta-(1-&gt;4) bond in the backbone of a xyloglucan and transfers the xyloglucanyl segment on to O-4 of the non-reducing terminal glucose residue of an acceptor, which can be a xyloglucan or an oligosaccharide of xyloglucan.. In terms of biological role, possesses xyloglucan endotransglucosylase (XET) activity in vitro. Does not possess xyloglucan endohydrolysis (XEH) activity. Cleaves and religates xyloglucan polymers, an essential constituent of the primary cell wall, and thereby participates in cell wall construction of growing tissues. Involved in cell proliferation in the tissue reunion process of wounded inflorescence stems. Maybe a downstream target of NAC071 as a consequence of auxin action in wounded stems. The chain is Xyloglucan endotransglucosylase/hydrolase protein 19 from Arabidopsis thaliana (Mouse-ear cress).